The sequence spans 131 residues: UPF0102 protein YraN (131 aa).

A compositionally biased stretch (polar residues) spans 1 to 19 (MATVPTRSGSPRQLTTKQT). Residues 1-21 (MATVPTRSGSPRQLTTKQTGD) form a disordered region.

This sequence belongs to the UPF0102 family.

The sequence is that of UPF0102 protein YraN from Escherichia coli (strain K12 / MC4100 / BW2952).